We begin with the raw amino-acid sequence, 353 residues long: Photosystem II protein D1 (353 aa).

Residue threonine 2 is modified to N-acetylthreonine. A Phosphothreonine modification is found at threonine 2. 3 consecutive transmembrane segments (helical) span residues 29 to 46 (YIGW…TATS), 118 to 133 (HFLL…EWEL), and 142 to 156 (WIAV…AATA). Residue histidine 118 coordinates chlorophyll a. Residue tyrosine 126 coordinates pheophytin a. Positions 170 and 189 each coordinate [CaMn4O5] cluster. A helical transmembrane segment spans residues 197-218 (FHMLGVAGVFGGSLFSAMHGSL). Histidine 198 contributes to the chlorophyll a binding site. A quinone is bound by residues histidine 215 and 264–265 (SF). Position 215 (histidine 215) interacts with Fe cation. Position 272 (histidine 272) interacts with Fe cation. The chain crosses the membrane as a helical span at residues 274-288 (FLAAWPVVCIWFTAL). [CaMn4O5] cluster-binding residues include histidine 332, glutamate 333, aspartate 342, and alanine 344. Positions 345-353 (SVDAPAVQG) are excised as a propeptide.

It belongs to the reaction center PufL/M/PsbA/D family. PSII is composed of 1 copy each of membrane proteins PsbA, PsbB, PsbC, PsbD, PsbE, PsbF, PsbH, PsbI, PsbJ, PsbK, PsbL, PsbM, PsbT, PsbX, PsbY, PsbZ, Psb30/Ycf12, at least 3 peripheral proteins of the oxygen-evolving complex and a large number of cofactors. It forms dimeric complexes. It depends on The D1/D2 heterodimer binds P680, chlorophylls that are the primary electron donor of PSII, and subsequent electron acceptors. It shares a non-heme iron and each subunit binds pheophytin, quinone, additional chlorophylls, carotenoids and lipids. D1 provides most of the ligands for the Mn4-Ca-O5 cluster of the oxygen-evolving complex (OEC). There is also a Cl(-1) ion associated with D1 and D2, which is required for oxygen evolution. The PSII complex binds additional chlorophylls, carotenoids and specific lipids. as a cofactor. In terms of processing, tyr-161 forms a radical intermediate that is referred to as redox-active TyrZ, YZ or Y-Z. Post-translationally, C-terminally processed by CTPA; processing is essential to allow assembly of the oxygen-evolving complex and thus photosynthetic growth.

The protein localises to the plastid. The protein resides in the chloroplast thylakoid membrane. It catalyses the reaction 2 a plastoquinone + 4 hnu + 2 H2O = 2 a plastoquinol + O2. In terms of biological role, photosystem II (PSII) is a light-driven water:plastoquinone oxidoreductase that uses light energy to abstract electrons from H(2)O, generating O(2) and a proton gradient subsequently used for ATP formation. It consists of a core antenna complex that captures photons, and an electron transfer chain that converts photonic excitation into a charge separation. The D1/D2 (PsbA/PsbD) reaction center heterodimer binds P680, the primary electron donor of PSII as well as several subsequent electron acceptors. The chain is Photosystem II protein D1 from Nephroselmis olivacea (Green alga).